A 186-amino-acid chain; its full sequence is Vacuolar protein sorting-associated protein 29 (186 aa).

This sequence belongs to the VPS29 family. In terms of assembly, component of the commander complex consisting of the CCC subcomplex and the retriever subcomplex. Component of the heterotrimeric retriever complex formed by VPS26C, VPS29 and VPS35L; within the complex interacts with VPS35L. Component of the heterotrimeric retromer cargo-selective complex (CSC), also described as vacuolar protein sorting subcomplex (VPS), formed by VPS26 (VPS26A or VPS26B), VPS29 and VPS35. The CSC has a highly elongated structure with VPS26 and VPS29 binding independently at opposite distal ends of VPS35 as central platform. The CSC is believed to associate with variable sorting nexins to form functionally distinct retromer complex variants. The originally described retromer complex (also called SNX-BAR retromer) is a pentamer containing the CSC and a heterodimeric membrane-deforming subcomplex formed between SNX1 or SNX2 and SNX5 or SNX6 (also called SNX-BAR subcomplex); the respective CSC and SNX-BAR subcomplexes associate with low affinity. The CSC associates with SNX3 to form a SNX3-retromer complex. The CSC associates with SNX27, the WASH complex and the SNX-BAR subcomplex to form the SNX27-retromer complex. Interacts with VPS26A, VPS35, SNX1, SNX2, SNX3, SNX27, WASHC5. Interacts with TBC1D5; this interaction is blocked by VPS35L in the retriever complex. Interacts with SNX17; the interaction is indirect; SNX17 (via its C-terminus) interacts with the retriever complex (via VPS26C and VPS35L). Interacts with VPS26B and ANKRD27.

It is found in the cytoplasm. The protein localises to the membrane. Its subcellular location is the endosome membrane. In terms of biological role, component of the commander complex that is essential for endosomal recycling of transmembrane cargos; the commander complex is composed of the CCC subcomplex and the retriever subcomplex. Component of the retriever complex, which is a heterotrimeric complex related to retromer cargo-selective complex (CSC) and essential for retromer-independent retrieval and recycling of numerous cargos such as integrin alpha-5/beta-1 (ITGA5:ITGB1). Component of the retromer cargo-selective complex (CSC). The CSC is believed to be the core functional component of retromer or respective retromer complex variants acting to prevent missorting of selected transmembrane cargo proteins into the lysosomal degradation pathway. The recruitment of the CSC to the endosomal membrane involves RAB7A and SNX3. The SNX-BAR retromer mediates retrograde transport of cargo proteins from endosomes to the trans-Golgi network (TGN) and is involved in endosome-to-plasma membrane transport for cargo protein recycling. The SNX3-retromer mediates the retrograde endosome-to-TGN transport of WLS distinct from the SNX-BAR retromer pathway. The SNX27-retromer is believed to be involved in endosome-to-plasma membrane trafficking and recycling of a broad spectrum of cargo proteins. The CSC seems to act as recruitment hub for other proteins, such as the WASH complex and TBC1D5. Required to regulate transcytosis of the polymeric immunoglobulin receptor (pIgR-pIgA). In the endosomes, retriever complex drives the retrieval and recycling of NxxY-motif-containing cargo proteins by coupling to SNX17, a cargo essential for the homeostatic maintenance of numerous cell surface proteins associated with processes that include cell migration, cell adhesion, nutrient supply and cell signaling. The recruitment of the retriever complex to the endosomal membrane involves CCC and WASH complexes. Involved in GLUT1 endosome-to-plasma membrane trafficking; the function is dependent of association with ANKRD27. The polypeptide is Vacuolar protein sorting-associated protein 29 (VPS29) (Gallus gallus (Chicken)).